The following is a 69-amino-acid chain: Protein transport protein Sec61 subunit gamma (69 aa).

Residues 1–32 are Cytoplasmic-facing; sequence MDAVDSVVDPLREFAKDSVRLVKRCHKPDRKE. The helical transmembrane segment at 33-61 threads the bilayer; sequence FTKVAARTAIGFVVMGFVGFFVKLIFIPI. Topologically, residues 62–69 are extracellular; the sequence is NNIIVGSG.

Belongs to the SecE/SEC61-gamma family. Heterotrimeric complex composed of SEC61-alpha, SEC61-beta and SEC61-gamma.

Its subcellular location is the endoplasmic reticulum membrane. Necessary for protein translocation in the endoplasmic reticulum. In Oryza sativa subsp. japonica (Rice), this protein is Protein transport protein Sec61 subunit gamma.